A 117-amino-acid polypeptide reads, in one-letter code: Ribonuclease P protein component (117 aa).

This sequence belongs to the RnpA family. Consists of a catalytic RNA component (M1 or rnpB) and a protein subunit.

It catalyses the reaction Endonucleolytic cleavage of RNA, removing 5'-extranucleotides from tRNA precursor.. In terms of biological role, RNaseP catalyzes the removal of the 5'-leader sequence from pre-tRNA to produce the mature 5'-terminus. It can also cleave other RNA substrates such as 4.5S RNA. The protein component plays an auxiliary but essential role in vivo by binding to the 5'-leader sequence and broadening the substrate specificity of the ribozyme. In Nocardioides sp. (strain ATCC BAA-499 / JS614), this protein is Ribonuclease P protein component.